We begin with the raw amino-acid sequence, 428 residues long: Zinc-type alcohol dehydrogenase B (428 aa).

6 residues coordinate Zn(2+): Cys116, His137, Cys167, Cys170, Cys173, and Cys181. Lys393 is modified (N6-benzoyllysine).

Belongs to the zinc-containing alcohol dehydrogenase family. Class-III subfamily. As to quaternary structure, homodimer. Zn(2+) serves as cofactor. Post-translationally, benzoylation at lys-393 by gcnE leads to the activation od adhB.

The catalysed reaction is a primary alcohol + NAD(+) = an aldehyde + NADH + H(+). It catalyses the reaction a secondary alcohol + NAD(+) = a ketone + NADH + H(+). Its function is as follows. Zinc-type alcohol dehydrogenase involved in development, secondary metabolism, pathogenicity, and stress response. Specifically controls the formation of sclerotia and the biosynthesis of aflatoxin. Contribute to seed colonization of A flavus on host maize seed. The protein is Zinc-type alcohol dehydrogenase B of Aspergillus flavus (strain ATCC 200026 / FGSC A1120 / IAM 13836 / NRRL 3357 / JCM 12722 / SRRC 167).